The sequence spans 499 residues: Maturase K (499 aa).

It belongs to the intron maturase 2 family. MatK subfamily.

The protein resides in the plastid. It localises to the chloroplast. In terms of biological role, usually encoded in the trnK tRNA gene intron. Probably assists in splicing its own and other chloroplast group II introns. The sequence is that of Maturase K from Camellia sasanqua (Christmas camellia).